We begin with the raw amino-acid sequence, 267 residues long: Protein isy-1 (267 aa).

A coiled-coil region spans residues Leu175–Asp204. The segment at Gln195 to Leu221 is disordered.

This sequence belongs to the ISY1 family. As to expression, ubiquitously expressed.

The protein localises to the nucleus. Functionally, regulates the processing of the mir-60 microRNA (miRNA), which in turn negatively regulates the expression of the transcription factor zip-10. Does not affect the splicing of zip-10. This chain is Protein isy-1, found in Caenorhabditis elegans.